The primary structure comprises 1203 residues: DNA-directed RNA polymerase I subunit RPA135 (1203 aa).

The residue at position 2 (Ser-2) is an N-acetylserine. Ser-81 bears the Phosphoserine mark. Residues 1104-1131 (CRECGSILTTQQSVPRIGSISTVCCRRC) form a C4-type zinc finger. Ser-1156 bears the Phosphoserine mark.

It belongs to the RNA polymerase beta chain family. Component of the RNA polymerase I (Pol I) complex consisting of 14 subunits: RPA135, RPA190, RPC40, RPA14, RPB5, RPO26, RPA43, RPB8, RPA12, RPB10, RPC19, RPC10, RPA49 and RPA34. The complex is composed of a horseshoe-shaped core containing ten subunits (RPA135, RPA190, RPB5, RPO26, RPB8, RPB10, RPC10, RPA12, RPC19 and RPC40) where RPA135 and RPA190 form the DNA-binding cleft. Outside of the core, RPA14 and RPA43 form the stalk that mediates interactions with transcription initiation factors and newly synthesized RNA.

Its subcellular location is the nucleus. The protein resides in the nucleolus. It catalyses the reaction RNA(n) + a ribonucleoside 5'-triphosphate = RNA(n+1) + diphosphate. In terms of biological role, DNA-dependent RNA polymerases catalyze the transcription of DNA into RNA using the four ribonucleoside triphosphates as substrates. Component of RNA polymerase I (Pol I) which synthesizes ribosomal RNA precursors. Besides, RNA polymerase I has intrinsic RNA cleavage activity. RPA190 and RPA135 both contribute to the polymerase catalytic activity and together form the Pol I active center. In addition, subunit RPA12 contributes a catalytic zinc ribbon that is required for RNA cleavage by Pol I. A single stranded DNA template strand of the promoter is positioned within the central active site cleft of Pol I. A bridging helix emanates from RPA190 and crosses the cleft near the catalytic site and is thought to promote translocation of Pol I by acting as a ratchet that moves the RNA-DNA hybrid through the active site by switching from straight to bent conformations at each step of nucleotide addition. This Saccharomyces cerevisiae (strain ATCC 204508 / S288c) (Baker's yeast) protein is DNA-directed RNA polymerase I subunit RPA135 (RPA135).